Here is a 62-residue protein sequence, read N- to C-terminus: Pro-MCH variant (62 aa).

Residues Gly-23–Glu-41 form an NGE-like region. The disordered stretch occupies residues Ala-29–Asp-62. Positions Glu-44–Ile-56 are NEI-like. The interval Asp-60–Asp-62 is melanin-concentrating hormone-like.

It belongs to the melanin-concentrating hormone family.

The polypeptide is Pro-MCH variant (PMCHL1) (Pan paniscus (Pygmy chimpanzee)).